A 272-amino-acid chain; its full sequence is Undecaprenyl-diphosphatase (272 aa).

8 helical membrane-spanning segments follow: residues 1–21 (MSTL…FLPI), 39–59 (QGLA…MMYF), 91–111 (WWIL…KDFI), 117–137 (SALV…FADI), 151–171 (LGLK…IPGT), 196–216 (FLLS…KLIL), 228–248 (LGSL…LILL), and 251–271 (LGMM…LWFI).

Belongs to the UppP family.

It is found in the cell inner membrane. It catalyses the reaction di-trans,octa-cis-undecaprenyl diphosphate + H2O = di-trans,octa-cis-undecaprenyl phosphate + phosphate + H(+). Catalyzes the dephosphorylation of undecaprenyl diphosphate (UPP). Confers resistance to bacitracin. The sequence is that of Undecaprenyl-diphosphatase from Colwellia psychrerythraea (strain 34H / ATCC BAA-681) (Vibrio psychroerythus).